We begin with the raw amino-acid sequence, 257 residues long: tRNA (guanine-N(7)-)-methyltransferase (257 aa).

Residues 1-42 (MTVVVSDHQNPRPPGDDAAPLGRTGNRDRPPGSFFGRRKGHR) form a disordered region. Glutamate 84, glutamate 109, aspartate 136, and aspartate 158 together coordinate S-adenosyl-L-methionine. Residue aspartate 158 is part of the active site. Positions 162 and 194 each coordinate substrate.

The protein belongs to the class I-like SAM-binding methyltransferase superfamily. TrmB family.

It catalyses the reaction guanosine(46) in tRNA + S-adenosyl-L-methionine = N(7)-methylguanosine(46) in tRNA + S-adenosyl-L-homocysteine. It participates in tRNA modification; N(7)-methylguanine-tRNA biosynthesis. In terms of biological role, catalyzes the formation of N(7)-methylguanine at position 46 (m7G46) in tRNA. The polypeptide is tRNA (guanine-N(7)-)-methyltransferase (Nitrobacter winogradskyi (strain ATCC 25391 / DSM 10237 / CIP 104748 / NCIMB 11846 / Nb-255)).